Here is a 228-residue protein sequence, read N- to C-terminus: Protein crossbronx homolog (228 aa).

Residues 14–168 (LQEYKILAEY…VEQCVEDSQR (155 aa)) form the UBC core domain.

The protein belongs to the ubiquitin-conjugating enzyme family. FTS subfamily.

The chain is Protein crossbronx homolog from Anopheles gambiae (African malaria mosquito).